A 234-amino-acid polypeptide reads, in one-letter code: 2-amino-5-formylamino-6-ribosylaminopyrimidin-4(3H)-one 5'-monophosphate deformylase (234 aa).

Fe cation-binding residues include Glu-29, His-31, Asp-40, and His-109.

This sequence belongs to the creatininase superfamily. FAPy deformylase family. In terms of assembly, homodimer. Fe(2+) serves as cofactor. Requires Zn(2+) as cofactor.

It catalyses the reaction 2-amino-5-formylamino-6-(5-phospho-D-ribosylamino)pyrimidin-4(3H)-one + H2O = 2,5-diamino-6-(1-D-ribosylamino)pyrimidin-4(3H)-one 5'-phosphate + formate + H(+). It functions in the pathway cofactor biosynthesis; coenzyme F420 biosynthesis. The protein operates within cofactor biosynthesis; riboflavin biosynthesis. Its function is as follows. Catalyzes the hydrolysis of the formamide of 2-amino-5-formylamino-6-ribosylamino-4(3H)-pyrimidinone 5'-monophosphate (FAPy) to form 2,5-diamino-6-ribosylamino-4(3H)-pyrimidinone 5'-phosphate (APy). This chain is 2-amino-5-formylamino-6-ribosylaminopyrimidin-4(3H)-one 5'-monophosphate deformylase, found in Methanobrevibacter ruminantium (strain ATCC 35063 / DSM 1093 / JCM 13430 / OCM 146 / M1) (Methanobacterium ruminantium).